Reading from the N-terminus, the 1238-residue chain is Cryptic loci regulator protein 1 (1238 aa).

Disordered regions lie at residues 133 to 156 (TQQQ…TEPN), 196 to 237 (PFSN…PSSI), 277 to 303 (ASLY…LGSM), 546 to 568 (QKSV…IDTT), 696 to 735 (SDNT…PFVH), and 784 to 824 (TLKE…QSRS). Polar residues predominate over residues 214–223 (NVKNNSKKTA). Positions 224–237 (SSVNSNHSSIPSSI) are enriched in low complexity. The span at 291 to 303 (SSRNTSSYNLGSM) shows a compositional bias: polar residues. Low complexity predominate over residues 702 to 723 (SLPKPSNSKLSSISSDGDASSN). A compositionally biased stretch (basic and acidic residues) spans 785–796 (LKEDASSTKQAK). Polar residues predominate over residues 810 to 819 (NDVSKNNSGE). The segment at 1062–1087 (LNCEVSNCKKCFSNYEDMFKHLQHSH) adopts a C2H2-type zinc-finger fold.

In terms of assembly, interacts with clr3.

It localises to the nucleus. Its subcellular location is the chromosome. The protein localises to the centromere. It is found in the telomere. Its function is as follows. Regulates silencing of the mat2 and mat3 loci. Organizes the chromatin structure of the mating-type region where it also participates in establishing the 'cold spot' for recombination. Required for proper positioning of nucleosomes at heterochromatic loci and for transcriptional gene silencing (TGS) function of the Snf2/Hdac-containing repressor complex (SHREC). The chain is Cryptic loci regulator protein 1 (clr1) from Schizosaccharomyces pombe (strain 972 / ATCC 24843) (Fission yeast).